Here is a 316-residue protein sequence, read N- to C-terminus: Arginase-1 (316 aa).

A disordered region spans residues 1–26 (MAKERHSVGVIGAPFSKGQPRRGVEE). H101, D124, H126, and D128 together coordinate Mn(2+). Residues 126 to 130 (HADIN), 137 to 139 (CGN), and D183 each bind substrate. 2 residues coordinate Mn(2+): D232 and D234. T246 lines the substrate pocket.

Belongs to the arginase family. Homotrimer. Mn(2+) is required as a cofactor. In terms of tissue distribution, strongest expression in liver.

It carries out the reaction L-arginine + H2O = urea + L-ornithine. It participates in nitrogen metabolism; urea cycle; L-ornithine and urea from L-arginine: step 1/1. The chain is Arginase-1 (arg1) from Xenopus laevis (African clawed frog).